The chain runs to 210 residues: Thymidylate kinase (210 aa).

ATP is bound at residue 10–17 (GGEGAGKS).

The protein belongs to the thymidylate kinase family.

It catalyses the reaction dTMP + ATP = dTDP + ADP. Functionally, phosphorylation of dTMP to form dTDP in both de novo and salvage pathways of dTTP synthesis. The polypeptide is Thymidylate kinase (Magnetococcus marinus (strain ATCC BAA-1437 / JCM 17883 / MC-1)).